An 865-amino-acid chain; its full sequence is Aconitate hydratase B (865 aa).

Residues arginine 191, 244 to 246 (SSR), 414 to 416 (QDT), and serine 498 contribute to the substrate site. Cysteine 710, cysteine 769, and cysteine 772 together coordinate [4Fe-4S] cluster. Residues arginine 791 and arginine 796 each coordinate substrate.

This sequence belongs to the aconitase/IPM isomerase family. In terms of assembly, monomer. AcnB can also form a homodimer. The monomer-homodimer transition is dependent on iron availability and the carboxymethylation of C-273 inhibits the dimer formation. Requires [4Fe-4S] cluster as cofactor.

It catalyses the reaction citrate = D-threo-isocitrate. It carries out the reaction (2S,3R)-3-hydroxybutane-1,2,3-tricarboxylate = 2-methyl-cis-aconitate + H2O. Its pathway is organic acid metabolism; propanoate degradation. The protein operates within carbohydrate metabolism; tricarboxylic acid cycle; isocitrate from oxaloacetate: step 2/2. In terms of biological role, involved in the catabolism of short chain fatty acids (SCFA) via the tricarboxylic acid (TCA)(acetyl degradation route) and the 2-methylcitrate cycle I (propionate degradation route). Catalyzes the reversible isomerization of citrate to isocitrate via cis-aconitate. Also catalyzes the hydration of 2-methyl-cis-aconitate to yield (2R,3S)-2-methylisocitrate. The apo form of AcnB functions as a RNA-binding regulatory protein. During oxidative stress inactive AcnB apo-enzyme without iron sulfur clusters binds the acnB mRNA 3' UTRs (untranslated regions), stabilizes acnB mRNA and increases AcnB synthesis, thus mediating a post-transcriptional positive autoregulatory switch. AcnB also decreases the stability of the sodA transcript. The polypeptide is Aconitate hydratase B (Escherichia coli (strain K12)).